The following is a 678-amino-acid chain: RAS guanyl-releasing protein 4 (678 aa).

2 stretches are compositionally biased toward basic residues: residues 1–10 (MNRKDIKRKS) and 20–32 (GHGR…RHKT). 2 disordered regions span residues 1 to 33 (MNRK…HKTC) and 165 to 185 (GDAS…MSSP). The N-terminal Ras-GEF domain maps to 49 to 175 (GVLSESSCSV…DASNLLSPGG (127 aa)). The Ras-GEF domain occupies 201 to 432 (ETEELAQHLT…YELSYAREPR (232 aa)). One can recognise an EF-hand domain in the interval 466–501 (HVEQLVESVFKNYDPEGHGSISLEDFEKLSANFPFA). The segment at 540-595 (LHAFQEVTFRKPTFCHSCNGFVSTGPLWGVTKRGYRCQDCGLCCHRHCRDQVRVEC) adopts a Phorbol-ester/DAG-type zinc-finger fold. Disordered stretches follow at residues 598 to 620 (RPET…LPPT) and 651 to 678 (SSHS…KSSV). Positions 605–619 (PGPPGAPGPATPLPP) are enriched in pro residues.

It belongs to the RASGRP family. As to expression, expressed by mast cells and their progenitors (at protein level).

The protein resides in the cytoplasm. It is found in the cell membrane. Functions as a cation- and diacylglycerol (DAG)-regulated nucleotide exchange factor activating Ras through the exchange of bound GDP for GTP. In neutrophils, participates in a phospholipase C-activating N-formyl peptide-activated GPCR (G protein-coupled receptor) signaling pathway by promoting Ras-mediated activation of PIK3CG/PI3Kgamma to promote neutrophil functional responses. In CD117(+) dendritic cells and mast cells, participates in an lipopolysaccharide (LPS)-activated signaling pathway that stimulates the production of interferon-gamma and other pro-inflammatory cytokines by natural killer (NK) cells. May function in mast cell differentiation. Does not appear to be required for the development of B-cells, DC-cells, T-cells, or NK-cells. The chain is RAS guanyl-releasing protein 4 (Rasgrp4) from Rattus norvegicus (Rat).